We begin with the raw amino-acid sequence, 560 residues long: DNA ligase B (560 aa).

The active-site N6-AMP-lysine intermediate is Lys-124.

It belongs to the NAD-dependent DNA ligase family. LigB subfamily.

The enzyme catalyses NAD(+) + (deoxyribonucleotide)n-3'-hydroxyl + 5'-phospho-(deoxyribonucleotide)m = (deoxyribonucleotide)n+m + AMP + beta-nicotinamide D-nucleotide.. Functionally, catalyzes the formation of phosphodiester linkages between 5'-phosphoryl and 3'-hydroxyl groups in double-stranded DNA using NAD as a coenzyme and as the energy source for the reaction. This chain is DNA ligase B, found in Escherichia coli O7:K1 (strain IAI39 / ExPEC).